The chain runs to 346 residues: MAFRIASSPFTHNRQTTRQIMIQVMLACLPGLMALTTFFGSGIIIQLVIACVTALVAEGVVLTLRRQPLASRLGDGSALLTALLLALSLPPLGPWWMMVLATAFAIVIAKQLYGGLGHNPFNPAMVGYVVLLISFPVQMTSWSPQQSLLLHPVSLTDSMALIFTGVTPDGLTLTQLRATVDGITQATPLDGFKTGLRTGAMTAFHHRWDWQASAGWTWANIGFLLGGLYLIWRRVISWHIPLSLLAAMLIGAGLGHWLAPVVSAPPLLHLFSGATMLGAFFIATDPVTAAATVRGRVIFGALTGLLVWLIRTWGGYPDGVAFAVLLANICVPLIDHYTQPRAYGHR.

4 consecutive transmembrane segments (helical) span residues 20–40 (IMIQ…TFFG), 42–62 (GIII…GVVL), 69–91 (LASR…SLPP), and 120–140 (PFNP…VQMT). Threonine 187 bears the FMN phosphoryl threonine mark. 5 helical membrane passes run 212-232 (ASAG…YLIW), 242-262 (LSLL…APVV), 264-284 (APPL…FIAT), 290-310 (AATV…VWLI), and 314-334 (GGYP…VPLI).

The protein belongs to the NqrB/RnfD family. The complex is composed of six subunits: RnfA, RnfB, RnfC, RnfD, RnfE and RnfG. FMN serves as cofactor.

The protein localises to the cell inner membrane. In terms of biological role, part of a membrane-bound complex that couples electron transfer with translocation of ions across the membrane. The protein is Ion-translocating oxidoreductase complex subunit D of Sodalis glossinidius (strain morsitans).